A 148-amino-acid polypeptide reads, in one-letter code: uncharacterized protein (148 aa).

This is an uncharacterized protein from Schizosaccharomyces pombe (strain 972 / ATCC 24843) (Fission yeast).